A 313-amino-acid chain; its full sequence is MKLKIAVQMDHISTVSIAGDTSFALSLEAQRRGHQLFHYTPDRLSLRDGKVFARIEEMQVRDEKGSHYSLGEKVRTDLSEMDVVLLRQDPPFDMNYITTTHILERIHPKTLVVNDPAWVRNSPEKIFVTEFADLMPDTLITKDPLEVAAFRKEFGDIIVKPLYGNGGAGIFHLHEADRNLASLLEMFGQLFREPYIVQRYLKDVRKGDKRIILIDGEPVGAINRVPAEHDSRSNMHVGGRAEKTELTEREREICARIGPSLRERGFILVGIDVIGDYMTEINVTSPTGVREVQRFGGADIASLFWDAVEGKRK.

An ATP-grasp domain is found at 125-309 (KIFVTEFADL…IASLFWDAVE (185 aa)). 151 to 207 (RKEFGDIIVKPLYGNGGAGIFHLHEADRNLASLLEMFGQLFREPYIVQRYLKDVRKG) serves as a coordination point for ATP. Mg(2+)-binding residues include Glu280 and Asn282.

The protein belongs to the prokaryotic GSH synthase family. It depends on Mg(2+) as a cofactor. Mn(2+) is required as a cofactor.

It carries out the reaction gamma-L-glutamyl-L-cysteine + glycine + ATP = glutathione + ADP + phosphate + H(+). The protein operates within sulfur metabolism; glutathione biosynthesis; glutathione from L-cysteine and L-glutamate: step 2/2. In Mesorhizobium japonicum (strain LMG 29417 / CECT 9101 / MAFF 303099) (Mesorhizobium loti (strain MAFF 303099)), this protein is Glutathione synthetase.